Consider the following 257-residue polypeptide: Probable ABC transporter arginine-binding protein ArtJ (257 aa).

The first 23 residues, 1–23, serve as a signal peptide directing secretion; that stretch reads MCIKRKKTWIAFLAVVCSFCLTG. 6 residues coordinate L-arginine: N41, E48, G100, S102, R107, and Y151.

The protein belongs to the bacterial solute-binding protein 3 family.

The protein localises to the secreted. Its subcellular location is the cell surface. Probably part of an ABC transporter complex involved in arginine transport. Binds arginine. Interacts with host epithelial cells, suggesting a role in host-cell adhesion during infection. The polypeptide is Probable ABC transporter arginine-binding protein ArtJ (Chlamydia trachomatis serovar D (strain ATCC VR-885 / DSM 19411 / UW-3/Cx)).